The chain runs to 449 residues: 3-phosphoshikimate 1-carboxyvinyltransferase (449 aa).

The segment at 1–29 is disordered; that stretch reads MSHDSVPSPITARAGTPLRGRLRPPGDKS. 3-phosphoshikimate is bound by residues K28, S29, and R33. K28 contacts phosphoenolpyruvate. 2 residues coordinate phosphoenolpyruvate: G101 and R129. S175, Q177, D330, and K357 together coordinate 3-phosphoshikimate. Residue Q177 participates in phosphoenolpyruvate binding. Residue D330 is the Proton acceptor of the active site. The phosphoenolpyruvate site is built by R361 and R405.

It belongs to the EPSP synthase family. In terms of assembly, monomer.

It is found in the cytoplasm. The catalysed reaction is 3-phosphoshikimate + phosphoenolpyruvate = 5-O-(1-carboxyvinyl)-3-phosphoshikimate + phosphate. It functions in the pathway metabolic intermediate biosynthesis; chorismate biosynthesis; chorismate from D-erythrose 4-phosphate and phosphoenolpyruvate: step 6/7. Functionally, catalyzes the transfer of the enolpyruvyl moiety of phosphoenolpyruvate (PEP) to the 5-hydroxyl of shikimate-3-phosphate (S3P) to produce enolpyruvyl shikimate-3-phosphate and inorganic phosphate. This Methylobacterium sp. (strain 4-46) protein is 3-phosphoshikimate 1-carboxyvinyltransferase.